The sequence spans 1430 residues: DNA-directed RNA polymerase subunit beta' (1430 aa).

Cys-70, Cys-72, Cys-85, and Cys-88 together coordinate Zn(2+). Asp-495, Asp-497, and Asp-499 together coordinate Mg(2+). Positions 838, 912, 919, and 922 each coordinate Zn(2+).

This sequence belongs to the RNA polymerase beta' chain family. As to quaternary structure, the RNAP catalytic core consists of 2 alpha, 1 beta, 1 beta' and 1 omega subunit. When a sigma factor is associated with the core the holoenzyme is formed, which can initiate transcription. It depends on Mg(2+) as a cofactor. Requires Zn(2+) as cofactor.

The enzyme catalyses RNA(n) + a ribonucleoside 5'-triphosphate = RNA(n+1) + diphosphate. In terms of biological role, DNA-dependent RNA polymerase catalyzes the transcription of DNA into RNA using the four ribonucleoside triphosphates as substrates. The polypeptide is DNA-directed RNA polymerase subunit beta' (Rhodospirillum centenum (strain ATCC 51521 / SW)).